The sequence spans 183 residues: MNGFSTEEDSREGPPAAPAAAAPGYGQSCCLIEDGERCVRPAGNASFSKRVQKSISQKKLKLDIDKSVRHLYICDFHKNFIQSVRNKRKRKTSDDGGDSPEHDTDIPEVDLFQLQVNTLRRYKRHYKLQTRPGFNKAQLAETVSRHFRNIPVNEKETLAYFIYMVKSNKSRLDQKSEGGKQLE.

Met1 carries the N-acetylmethionine modification. Residues 1–10 show a composition bias toward acidic residues; the sequence is MNGFSTEEDS. The interval 1–23 is disordered; that stretch reads MNGFSTEEDSREGPPAAPAAAAP. Cystine bridges form between Cys29–Cys30 and Cys38–Cys74. Residues 29–77 form an Atypical zinc finger; sequence CCLIEDGERCVRPAGNASFSKRVQKSISQKKLKLDIDKSVRHLYICDFH. Lys49 is covalently cross-linked (Glycyl lysine isopeptide (Lys-Gly) (interchain with G-Cter in SUMO2)). The disordered stretch occupies residues 85–105; sequence RNKRKRKTSDDGGDSPEHDTD. The Nuclear localization signal (NLS) signature appears at 86 to 91; sequence NKRKRK. An important for DNA and phosphoinositide binding region spans residues 88 to 90; sequence RKR. At Thr92 the chain carries Phosphothreonine. Ser93 and Ser99 each carry phosphoserine. Residue Thr104 is modified to Phosphothreonine. Residues Lys155, Lys166, and Lys175 each participate in a glycyl lysine isopeptide (Lys-Gly) (interchain with G-Cter in SUMO2) cross-link.

It belongs to the SAP30 family. In terms of assembly, interacts with components of the histone deacetylase complex SIN3A, HDAC1 and HDAC2. Binds histones and nucleosomes. Interacts with FEZ1. As to expression, detected in brain and ovary, and at lower levels in heart, small intestine, lung, kidney, skeletal muscle, stomach and spleen (at protein level). Ubiquitous; expressed in all tissues tested with highest levels in testis.

It localises to the nucleus. It is found in the nucleolus. Functions as a transcription repressor, probably via its interaction with histone deacetylase complexes. Involved in the functional recruitment of the class 1 Sin3-histone deacetylase complex (HDAC) to the nucleolus. Binds DNA, apparently without sequence-specificity, and bends bound double-stranded DNA. Binds phosphoinositol phosphates (phosphoinositol 3-phosphate, phosphoinositol 4-phosphate and phosphoinositol 5-phosphate) via the same basic sequence motif that mediates DNA binding and nuclear import. In terms of biological role, functions as a transcription repressor; isoform 2 has lower transcription repressor activity than isoform 1 and isoform 3. Functionally, functions as a transcription repressor; its activity is marginally lower than that of isoform 1. The chain is Histone deacetylase complex subunit SAP30L (SAP30L) from Homo sapiens (Human).